A 107-amino-acid polypeptide reads, in one-letter code: Iron-sulfur cluster assembly protein CyaY (107 aa).

It belongs to the frataxin family.

Its function is as follows. Involved in iron-sulfur (Fe-S) cluster assembly. May act as a regulator of Fe-S biogenesis. The polypeptide is Iron-sulfur cluster assembly protein CyaY (Thioalkalivibrio sulfidiphilus (strain HL-EbGR7)).